We begin with the raw amino-acid sequence, 279 residues long: MTADLSSPRRARRSPSSYLGALVGKTIRRSIPTAIAFFVLLGIWQLLCSGENAACRPIQVVQESWDLIIDPFYRGSGTDQGLFWQIAASLQRVAVGYLMAAIAGIALGILIGVSVLMFQALDPIFQVLRTVPPLAWLPISLAAFRDSQPAAIFVIFITAIWPIIINTAVGVQNIPQDYNNVARVLKLSRLDYFLKVLLPATVPYIFTGLKIAIGLSWLAIVAAEMLTGGVGIGFFIWDAYNSGSNSEVILAIIYVGLVGLLLNALVGFIASRVVPDEQK.

The ABC transmembrane type-1 domain maps to 86 to 270; that stretch reads IAASLQRVAV…LLNALVGFIA (185 aa). 6 helical membrane-spanning segments follow: residues 98–118, 124–144, 151–171, 196–216, 217–237, and 249–269; these read LMAA…VLMF, IFQV…LAAF, AIFV…AVGV, VLLP…IGLS, WLAI…FFIW, and ILAI…VGFI.

This sequence belongs to the binding-protein-dependent transport system permease family. CysTW subfamily. In terms of assembly, the complex is composed of two ATP-binding proteins (NrtC and NrtD), two transmembrane proteins (NrtB) and a solute-binding protein (NrtA).

It is found in the cell inner membrane. Its function is as follows. Part of the ABC transporter complex NrtABCD involved in nitrate uptake. The complex is probably also involved in nitrite transport. Probably responsible for the translocation of the substrate across the membrane. The protein is Nitrate import permease protein NrtB of Leptolyngbya laminosa (Phormidium laminosum).